Consider the following 55-residue polypeptide: Large ribosomal subunit protein bL33 (55 aa).

The protein belongs to the bacterial ribosomal protein bL33 family.

The chain is Large ribosomal subunit protein bL33 from Bordetella avium (strain 197N).